A 1056-amino-acid chain; its full sequence is Carbamoyl phosphate synthase large chain (1056 aa).

Positions 1–397 (MPKKSHIKKV…AFKKALRSLD (397 aa)) are carboxyphosphate synthetic domain. Arg-127, Arg-167, Gly-173, Gly-174, Glu-206, Val-208, Glu-213, Gly-239, Ile-240, His-241, Gln-282, and Glu-294 together coordinate ATP. The ATP-grasp 1 domain maps to 131–323 (RDLMNAIGEP…IARVAAKIAI (193 aa)). Positions 282, 294, and 296 each coordinate Mg(2+). Mn(2+)-binding residues include Gln-282, Glu-294, and Asn-296. An oligomerization domain region spans residues 398-530 (NDMQQHTNPS…YSTWEEGCEL (133 aa)). The interval 531 to 920 (VRDSAKKVLI…YKACTAADNT (390 aa)) is carbamoyl phosphate synthetic domain. The ATP-grasp 2 domain maps to 662 to 853 (SRLLTRLEIP…LAKIAAKVMV (192 aa)). Residues Arg-698, Ser-737, Leu-739, Glu-744, Gly-769, Val-770, His-771, Ser-772, Gln-812, and Glu-824 each coordinate ATP. Mg(2+)-binding residues include Gln-812, Glu-824, and Asn-826. Mn(2+)-binding residues include Gln-812, Glu-824, and Asn-826. One can recognise an MGS-like domain in the interval 919-1056 (NTLPTTGNVF…EPLGHYHGLM (138 aa)). Positions 921 to 1056 (LPTTGNVFIS…EPLGHYHGLM (136 aa)) are allosteric domain.

It belongs to the CarB family. As to quaternary structure, composed of two chains; the small (or glutamine) chain promotes the hydrolysis of glutamine to ammonia, which is used by the large (or ammonia) chain to synthesize carbamoyl phosphate. Tetramer of heterodimers (alpha,beta)4. Mg(2+) is required as a cofactor. Requires Mn(2+) as cofactor.

It catalyses the reaction hydrogencarbonate + L-glutamine + 2 ATP + H2O = carbamoyl phosphate + L-glutamate + 2 ADP + phosphate + 2 H(+). It carries out the reaction hydrogencarbonate + NH4(+) + 2 ATP = carbamoyl phosphate + 2 ADP + phosphate + 2 H(+). It functions in the pathway amino-acid biosynthesis; L-arginine biosynthesis; carbamoyl phosphate from bicarbonate: step 1/1. Its pathway is pyrimidine metabolism; UMP biosynthesis via de novo pathway; (S)-dihydroorotate from bicarbonate: step 1/3. Functionally, large subunit of the glutamine-dependent carbamoyl phosphate synthetase (CPSase). CPSase catalyzes the formation of carbamoyl phosphate from the ammonia moiety of glutamine, carbonate, and phosphate donated by ATP, constituting the first step of 2 biosynthetic pathways, one leading to arginine and/or urea and the other to pyrimidine nucleotides. The large subunit (synthetase) binds the substrates ammonia (free or transferred from glutamine from the small subunit), hydrogencarbonate and ATP and carries out an ATP-coupled ligase reaction, activating hydrogencarbonate by forming carboxy phosphate which reacts with ammonia to form carbamoyl phosphate. In Methanoculleus marisnigri (strain ATCC 35101 / DSM 1498 / JR1), this protein is Carbamoyl phosphate synthase large chain.